Reading from the N-terminus, the 270-residue chain is Karrikin insensitive 2 receptor CA (270 aa).

Catalysis depends on Ser95, which acts as the Nucleophile. Catalysis depends on residues Asp217 and His246.

This sequence belongs to the AB hydrolase superfamily. Expressed in stigma.

The protein localises to the nucleus. The protein resides in the cytoplasm. Hydrolase which may be involved in plant olfaction during volatile communication. This Petunia hybrida (Petunia) protein is Karrikin insensitive 2 receptor CA.